The chain runs to 92 residues: Small ribosomal subunit protein uS19 (92 aa).

Belongs to the universal ribosomal protein uS19 family.

Its function is as follows. Protein S19 forms a complex with S13 that binds strongly to the 16S ribosomal RNA. This is Small ribosomal subunit protein uS19 from Bartonella quintana (strain Toulouse) (Rochalimaea quintana).